A 114-amino-acid chain; its full sequence is Ribosome-binding factor A (114 aa).

It belongs to the RbfA family. Monomer. Binds 30S ribosomal subunits, but not 50S ribosomal subunits or 70S ribosomes.

The protein localises to the cytoplasm. In terms of biological role, one of several proteins that assist in the late maturation steps of the functional core of the 30S ribosomal subunit. Associates with free 30S ribosomal subunits (but not with 30S subunits that are part of 70S ribosomes or polysomes). Required for efficient processing of 16S rRNA. May interact with the 5'-terminal helix region of 16S rRNA. This is Ribosome-binding factor A from Phytoplasma mali (strain AT).